Reading from the N-terminus, the 256-residue chain is Tryptophan synthase alpha chain (256 aa).

Catalysis depends on proton acceptor residues Glu45 and Asp56.

Belongs to the TrpA family. In terms of assembly, tetramer of two alpha and two beta chains.

It catalyses the reaction (1S,2R)-1-C-(indol-3-yl)glycerol 3-phosphate + L-serine = D-glyceraldehyde 3-phosphate + L-tryptophan + H2O. The protein operates within amino-acid biosynthesis; L-tryptophan biosynthesis; L-tryptophan from chorismate: step 5/5. Its function is as follows. The alpha subunit is responsible for the aldol cleavage of indoleglycerol phosphate to indole and glyceraldehyde 3-phosphate. In Christiangramia forsetii (strain DSM 17595 / CGMCC 1.15422 / KT0803) (Gramella forsetii), this protein is Tryptophan synthase alpha chain.